A 273-amino-acid chain; its full sequence is Formamidopyrimidine-DNA glycosylase (273 aa).

P2 serves as the catalytic Schiff-base intermediate with DNA. E3 (proton donor) is an active-site residue. Catalysis depends on K59, which acts as the Proton donor; for beta-elimination activity. Residues H92 and R111 each coordinate DNA. An FPG-type zinc finger spans residues K239–K273. The active-site Proton donor; for delta-elimination activity is the R263.

It belongs to the FPG family. In terms of assembly, monomer. Requires Zn(2+) as cofactor.

The enzyme catalyses Hydrolysis of DNA containing ring-opened 7-methylguanine residues, releasing 2,6-diamino-4-hydroxy-5-(N-methyl)formamidopyrimidine.. The catalysed reaction is 2'-deoxyribonucleotide-(2'-deoxyribose 5'-phosphate)-2'-deoxyribonucleotide-DNA = a 3'-end 2'-deoxyribonucleotide-(2,3-dehydro-2,3-deoxyribose 5'-phosphate)-DNA + a 5'-end 5'-phospho-2'-deoxyribonucleoside-DNA + H(+). Functionally, involved in base excision repair of DNA damaged by oxidation or by mutagenic agents. Acts as a DNA glycosylase that recognizes and removes damaged bases. Has a preference for oxidized purines, such as 7,8-dihydro-8-oxoguanine (8-oxoG). Has AP (apurinic/apyrimidinic) lyase activity and introduces nicks in the DNA strand. Cleaves the DNA backbone by beta-delta elimination to generate a single-strand break at the site of the removed base with both 3'- and 5'-phosphates. This chain is Formamidopyrimidine-DNA glycosylase, found in Listeria monocytogenes serotype 4b (strain F2365).